The chain runs to 266 residues: Enterotoxin type C-2 (266 aa).

The N-terminal stretch at 1 to 27 (MNKSRFISCVILIFALILVLFTPNVLA) is a signal peptide. Zn(2+)-binding residues include aspartate 36, histidine 74, glutamate 98, glutamate 107, and aspartate 110. Cysteine 120 and cysteine 137 are oxidised to a cystine. Zn(2+) is bound by residues histidine 145, glutamate 146, and histidine 149.

The protein belongs to the staphylococcal/streptococcal toxin family. As to quaternary structure, interacts with host MHC class II molecules composed of alpha/HLA-DRA and beta/HLA-DRB1 chains. The cofactor is Zn(2+).

Its subcellular location is the secreted. Its function is as follows. Staphylococcal enterotoxin that activates the host immune system by binding as unprocessed molecules to major histocompatibility (MHC) complex class II and T-cell receptor (TCR) molecules. In turn, this ternary complex activates a large number of T-lymphocytes initiating a systemic release of pro-inflammatory cytokines. Also causes the intoxication staphylococcal food poisoning syndrome. This chain is Enterotoxin type C-2 (entC2), found in Staphylococcus aureus.